The primary structure comprises 203 residues: tRNA (guanine-N(7)-)-methyltransferase (203 aa).

Glu-34, Glu-59, Asp-86, and Asp-107 together coordinate S-adenosyl-L-methionine. The active site involves Asp-107. Residues Lys-111, Asp-143, and 181–184 each bind substrate; that span reads TSYE.

Belongs to the class I-like SAM-binding methyltransferase superfamily. TrmB family.

The catalysed reaction is guanosine(46) in tRNA + S-adenosyl-L-methionine = N(7)-methylguanosine(46) in tRNA + S-adenosyl-L-homocysteine. The protein operates within tRNA modification; N(7)-methylguanine-tRNA biosynthesis. Functionally, catalyzes the formation of N(7)-methylguanine at position 46 (m7G46) in tRNA. This chain is tRNA (guanine-N(7)-)-methyltransferase, found in Mycoplasmopsis pulmonis (strain UAB CTIP) (Mycoplasma pulmonis).